The primary structure comprises 208 residues: Large ribosomal subunit protein bL25 (208 aa).

Belongs to the bacterial ribosomal protein bL25 family. CTC subfamily. In terms of assembly, part of the 50S ribosomal subunit; part of the 5S rRNA/L5/L18/L25 subcomplex. Contacts the 5S rRNA. Binds to the 5S rRNA independently of L5 and L18.

Functionally, this is one of the proteins that binds to the 5S RNA in the ribosome where it forms part of the central protuberance. This Burkholderia pseudomallei (strain K96243) protein is Large ribosomal subunit protein bL25.